The primary structure comprises 100 residues: Large ribosomal subunit protein uL23 (100 aa).

This sequence belongs to the universal ribosomal protein uL23 family. Part of the 50S ribosomal subunit. Contacts protein L29, and trigger factor when it is bound to the ribosome.

One of the early assembly proteins it binds 23S rRNA. One of the proteins that surrounds the polypeptide exit tunnel on the outside of the ribosome. Forms the main docking site for trigger factor binding to the ribosome. The polypeptide is Large ribosomal subunit protein uL23 (Vibrio vulnificus (strain CMCP6)).